Consider the following 607-residue polypeptide: BTB/POZ domain-containing protein DOT3 (607 aa).

Positions 52-121 (TDLSIQVNDI…CYNLPLDLNP (70 aa)) constitute a BTB domain. Residues 211-487 (RCLYNDIATL…VQINTQVLFS (277 aa)) form the NPH3 domain. Phosphotyrosine is present on tyrosine 428. Disordered stretches follow at residues 498-520 (DKLPEKEEENSGGREDKRMSRDN) and 573-607 (KSFQTKREDEETRERTRRRSSTGQRTSFRRRMSMS). Basic and acidic residues-rich tracts occupy residues 499 to 520 (KLPEKEEENSGGREDKRMSRDN) and 577 to 586 (TKREDEETRE). Residues 511 to 563 (REDKRMSRDNEIIKTLKEELENVKKKMSELQSDYNELQQEYERLSSKQKSSHN) are a coiled coil.

It belongs to the NPH3 family. Expressed in emerging leaf primordia.

It participates in protein modification; protein ubiquitination. Its function is as follows. May act as a substrate-specific adapter of an E3 ubiquitin-protein ligase complex (CUL3-RBX1-BTB) which mediates the ubiquitination and subsequent proteasomal degradation of target proteins. Involved in leaf vasculature patterning. The sequence is that of BTB/POZ domain-containing protein DOT3 from Arabidopsis thaliana (Mouse-ear cress).